The following is a 129-amino-acid chain: Small ribosomal subunit protein uS11 (129 aa).

This sequence belongs to the universal ribosomal protein uS11 family. In terms of assembly, part of the 30S ribosomal subunit. Interacts with proteins S7 and S18. Binds to IF-3.

Functionally, located on the platform of the 30S subunit, it bridges several disparate RNA helices of the 16S rRNA. Forms part of the Shine-Dalgarno cleft in the 70S ribosome. This Nitrosomonas eutropha (strain DSM 101675 / C91 / Nm57) protein is Small ribosomal subunit protein uS11.